We begin with the raw amino-acid sequence, 237 residues long: UPF0173 metal-dependent hydrolase HQ_3368A (237 aa).

Belongs to the UPF0173 family.

This Haloquadratum walsbyi (strain DSM 16790 / HBSQ001) protein is UPF0173 metal-dependent hydrolase HQ_3368A.